Here is a 188-residue protein sequence, read N- to C-terminus: Peptidyl-tRNA hydrolase (188 aa).

TRNA is bound at residue Tyr14. His19 acts as the Proton acceptor in catalysis. TRNA contacts are provided by Tyr64, Asn66, and Asn113.

It belongs to the PTH family. As to quaternary structure, monomer.

It localises to the cytoplasm. The enzyme catalyses an N-acyl-L-alpha-aminoacyl-tRNA + H2O = an N-acyl-L-amino acid + a tRNA + H(+). Functionally, hydrolyzes ribosome-free peptidyl-tRNAs (with 1 or more amino acids incorporated), which drop off the ribosome during protein synthesis, or as a result of ribosome stalling. In terms of biological role, catalyzes the release of premature peptidyl moieties from peptidyl-tRNA molecules trapped in stalled 50S ribosomal subunits, and thus maintains levels of free tRNAs and 50S ribosomes. The sequence is that of Peptidyl-tRNA hydrolase from Chloroflexus aggregans (strain MD-66 / DSM 9485).